A 308-amino-acid polypeptide reads, in one-letter code: D-alanine--D-alanine ligase B (308 aa).

Residues 102–302 (KKVAAAAGVV…FAELLSWMVE (201 aa)) form the ATP-grasp domain. 128 to 183 (PMKPPYVVKPVREGSSFGVVIVKEDQPHPPQVIGSADWKYGDEVMVEGYIAGRELT) serves as a coordination point for ATP. Positions 252, 269, and 271 each coordinate Mg(2+).

This sequence belongs to the D-alanine--D-alanine ligase family. It depends on Mg(2+) as a cofactor. The cofactor is Mn(2+).

The protein resides in the cytoplasm. It catalyses the reaction 2 D-alanine + ATP = D-alanyl-D-alanine + ADP + phosphate + H(+). Its pathway is cell wall biogenesis; peptidoglycan biosynthesis. In terms of biological role, cell wall formation. The sequence is that of D-alanine--D-alanine ligase B from Brucella suis biovar 1 (strain 1330).